The chain runs to 298 residues: Phosphatidylglycerol--prolipoprotein diacylglyceryl transferase (298 aa).

3 helical membrane-spanning segments follow: residues 17-37, 59-79, and 97-117; these read LAVRWYGLMYLVGFIAAIVVG, MMFYGVLGTVLGGRLGYVLFY, and GGMSFHGGFLGVTLAMMLFAW. An a 1,2-diacyl-sn-glycero-3-phospho-(1'-sn-glycerol)-binding site is contributed by Arg-142. 2 helical membrane-spanning segments follow: residues 230 to 250 and 257 to 277; these read MGAISALFLIGYGLARFTVEF and FLGLLALGLSMGQWLSLPMIV.

Belongs to the Lgt family.

Its subcellular location is the cell inner membrane. The catalysed reaction is L-cysteinyl-[prolipoprotein] + a 1,2-diacyl-sn-glycero-3-phospho-(1'-sn-glycerol) = an S-1,2-diacyl-sn-glyceryl-L-cysteinyl-[prolipoprotein] + sn-glycerol 1-phosphate + H(+). It participates in protein modification; lipoprotein biosynthesis (diacylglyceryl transfer). In terms of biological role, catalyzes the transfer of the diacylglyceryl group from phosphatidylglycerol to the sulfhydryl group of the N-terminal cysteine of a prolipoprotein, the first step in the formation of mature lipoproteins. This Burkholderia cenocepacia (strain ATCC BAA-245 / DSM 16553 / LMG 16656 / NCTC 13227 / J2315 / CF5610) (Burkholderia cepacia (strain J2315)) protein is Phosphatidylglycerol--prolipoprotein diacylglyceryl transferase.